The chain runs to 353 residues: ATPase GET3 (353 aa).

26–33 (KGGVGKTT) serves as a coordination point for ATP. Residue D57 is part of the active site. Residues E244 and N271 each contribute to the ATP site. Positions 284 and 287 each coordinate Zn(2+).

It belongs to the arsA ATPase family. Homodimer. Component of the Golgi to ER traffic (GET) complex, which is composed of GET1, GET2 and GET3. Within the complex, GET1 and GET2 form a heterotetramer which is stabilized by phosphatidylinositol binding and which binds to the GET3 homodimer. Interacts with the chloride channel protein GEF1.

The protein resides in the cytoplasm. Its subcellular location is the endoplasmic reticulum. The protein localises to the golgi apparatus. Functionally, ATPase required for the post-translational delivery of tail-anchored (TA) proteins to the endoplasmic reticulum. Recognizes and selectively binds the transmembrane domain of TA proteins in the cytosol. This complex then targets to the endoplasmic reticulum by membrane-bound receptors GET1 and GET2, where the tail-anchored protein is released for insertion. This process is regulated by ATP binding and hydrolysis. ATP binding drives the homodimer towards the closed dimer state, facilitating recognition of newly synthesized TA membrane proteins. ATP hydrolysis is required for insertion. Subsequently, the homodimer reverts towards the open dimer state, lowering its affinity for the GET1-GET2 receptor, and returning it to the cytosol to initiate a new round of targeting. Cooperates with the HDEL receptor ERD2 to mediate the ATP-dependent retrieval of resident ER proteins that contain a C-terminal H-D-E-L retention signal from the Golgi to the ER. Involved in low-level resistance to the oxyanions arsenite and arsenate, and in heat tolerance. This Zygosaccharomyces rouxii (strain ATCC 2623 / CBS 732 / NBRC 1130 / NCYC 568 / NRRL Y-229) protein is ATPase GET3.